Consider the following 1564-residue polypeptide: NACHT domain- and WD repeat-containing protein 1 (1564 aa).

Residues 335 to 661 (TPLVLFGPPG…LLAIAHRQLV (327 aa)) form the NACHT domain. 341–348 (GPPGIGKT) contacts ATP. WD repeat units follow at residues 866–905 (GCHKGITAMAWGVEEKLLVIGTQDGIMAVWDMEEQHVIHM), 908–947 (GHTGEVRCVKIFAKGTLANSASKDYTLHLWNLLSGQEKFT), 956–994 (PAEPQIWNLHVDEAHKVVYSASGSKINAWNLETAEPVFH), 998–1037 (DASDPWMCMAVLASQATLLTVSRDGVVSLWSSATGKLQGK), 1044–1082 (KEETPTCAVSVQKQGKLVTGFSNGSISLVSSKGDRLLEK), 1083–1121 (LPDAVRFLVVSEDESLLAAGFGRSVRIFLADSRGFRRFM), 1126–1165 (EHEDMVETAVFGTENNLIITGSLDALIQVWSLSEQGTLLD), 1167–1207 (LEGV…RSRV), 1212–1251 (LDRTGLTAVSHNGSYVYFPKIGDKNKVTIWDLAEGEEQDS), 1253–1290 (DTSSEIRCLEVAEQRKLLFTGLVSGVVLVFPLNSRQDV), 1291–1327 (ICIPPPEARKAINCMSLSKCEDRLAIAYDNIVLVLDI), 1338–1376 (GPRYTFYTQLPETLSSVAILTDYRVVYSMTNGDLFLYEC), 1380–1418 (KAFPLETHRSRVACVEVSHKEQLVVSGSEDALLCLWDLQ), and 1425–1462 (EMSYTSSYCRGVQCACFSKDDKYVYVGLKDRSILVWSV).

As to quaternary structure, may interact with HSP90AA1, HSP90AB1 and BAG2. Expressed at highest levels in prostate, followed by testis, retina, trachea and optic nerve. Also detected in brain, epididymis, lung, vagina and pituitary. In the prostate, tends to be up-regulated during malignant progression compared to normal epithelium (at protein level).

The protein localises to the cytoplasm. It is found in the cytosol. Its function is as follows. May play a role in the control of androgen receptor (AR) protein steady-state levels. This Homo sapiens (Human) protein is NACHT domain- and WD repeat-containing protein 1 (NWD1).